The primary structure comprises 441 residues: 3'-N-debenzoyl-2'-deoxytaxol N-benzoyltransferase (441 aa).

Residues His-163 and Asp-373 each act as proton acceptor in the active site.

The protein belongs to the plant acyltransferase family.

The enzyme catalyses 3'-N-debenzoyltaxol + benzoyl-CoA = paclitaxel + CoA + H(+). Its pathway is alkaloid biosynthesis; taxol biosynthesis. Catalyzes the stereoselective coupling of the surrogate substrate N-debenzoyl-(3'RS)-2'-deoxytaxol with benzoyl-CoA to form predominantly one 3'-epimer of 2'-deoxytaxol. This enzymatic reaction constitutes the final acylation in the taxol biosynthetic pathway. The protein is 3'-N-debenzoyl-2'-deoxytaxol N-benzoyltransferase of Taxus canadensis (Canadian yew).